Here is a 115-residue protein sequence, read N- to C-terminus: Peptidyl-tRNA hydrolase (115 aa).

This sequence belongs to the PTH2 family.

Its subcellular location is the cytoplasm. It carries out the reaction an N-acyl-L-alpha-aminoacyl-tRNA + H2O = an N-acyl-L-amino acid + a tRNA + H(+). Functionally, the natural substrate for this enzyme may be peptidyl-tRNAs which drop off the ribosome during protein synthesis. The polypeptide is Peptidyl-tRNA hydrolase (Methanocaldococcus jannaschii (strain ATCC 43067 / DSM 2661 / JAL-1 / JCM 10045 / NBRC 100440) (Methanococcus jannaschii)).